A 3147-amino-acid polypeptide reads, in one-letter code: Probable polyketide synthase 1 (3147 aa).

The Ketosynthase family 3 (KS3) domain occupies 12 to 457 (SSDVAVIGVG…GSNCHLIIQE (446 aa)). Catalysis depends on for beta-ketoacyl synthase activity residues cysteine 180 and histidine 319. Residues 345-369 (QLNNFSTDGNDNDDDDDDNTSPEPL) are disordered. The span at 354 to 364 (NDNDDDDDDNT) shows a compositional bias: acidic residues. Residue histidine 380 is the For beta-ketoacyl synthase activity of the active site. The segment at 672–705 (GIYPSISVGHSFGEVSSYYLSGIISLETACKIVY) is acyl/malonyl transferase. Residue serine 682 is the For acyl/malonyl transferase activity of the active site. Residues 976–1127 (NRLEGPTTSL…ATISLEQQQP (152 aa)) form an N-terminal hotdog fold region. The region spanning 976–1298 (NRLEGPTTSL…IKSTNPKSTK (323 aa)) is the PKS/mFAS DH domain. Residue histidine 1014 is the Proton acceptor; for dehydratase activity of the active site. The segment at 1149 to 1298 (DISKLDKFEL…IKSTNPKSTK (150 aa)) is C-terminal hotdog fold. Residue aspartate 1209 is the Proton donor; for dehydratase activity of the active site. The Carrier domain maps to 2568–2645 (SSNISLQDKI…SFLEKVNGLS (78 aa)). Serine 2605 is modified (O-(pantetheine 4'-phosphoryl)serine). Positions 2723–2747 (PSLSQSDVLKTPPIKSLNNTKNSSL) are disordered. The span at 2738 to 2747 (SLNNTKNSSL) shows a compositional bias: polar residues. Positions 2789 to 3147 (VLGIGISVPG…FEGCFLKNVV (359 aa)) are chalcone synthase. The active site involves cysteine 2930.

The protein in the C-terminal section; belongs to the thiolase-like superfamily. Chalcone/stilbene synthases family. As to quaternary structure, homodimer. Requires pantetheine 4'-phosphate as cofactor.

It carries out the reaction (E)-4-coumaroyl-CoA + 3 malonyl-CoA + 3 H(+) = 2',4,4',6'-tetrahydroxychalcone + 3 CO2 + 4 CoA. It participates in secondary metabolite biosynthesis; flavonoid biosynthesis. Functionally, probable polyketide synthase. Produces only acylpyrones; in vitro. This Dictyostelium discoideum (Social amoeba) protein is Probable polyketide synthase 1 (stlA).